Reading from the N-terminus, the 469-residue chain is Ribosomal protein uS12 methylthiotransferase RimO (469 aa).

The region spanning 34–144 (NKIGFVSLGC…VLEHVHQFAP (111 aa)) is the MTTase N-terminal domain. 6 residues coordinate [4Fe-4S] cluster: C43, C79, C108, C176, C180, and C183. In terms of domain architecture, Radical SAM core spans 162–399 (LTPKHYAYLK…MLVQQEISAA (238 aa)). The region spanning 402–468 (QKRIGSTMKV…EYDLWGSLVR (67 aa)) is the TRAM domain.

The protein belongs to the methylthiotransferase family. RimO subfamily. The cofactor is [4Fe-4S] cluster.

It localises to the cytoplasm. It catalyses the reaction L-aspartate(89)-[ribosomal protein uS12]-hydrogen + (sulfur carrier)-SH + AH2 + 2 S-adenosyl-L-methionine = 3-methylsulfanyl-L-aspartate(89)-[ribosomal protein uS12]-hydrogen + (sulfur carrier)-H + 5'-deoxyadenosine + L-methionine + A + S-adenosyl-L-homocysteine + 2 H(+). Catalyzes the methylthiolation of an aspartic acid residue of ribosomal protein uS12. The chain is Ribosomal protein uS12 methylthiotransferase RimO from Vibrio vulnificus (strain YJ016).